We begin with the raw amino-acid sequence, 257 residues long: Ribosomal RNA small subunit methyltransferase A (257 aa).

6 residues coordinate S-adenosyl-L-methionine: His-12, Leu-14, Gly-39, Glu-60, Asp-83, and Asn-101.

This sequence belongs to the class I-like SAM-binding methyltransferase superfamily. rRNA adenine N(6)-methyltransferase family. RsmA subfamily.

Its subcellular location is the cytoplasm. It carries out the reaction adenosine(1518)/adenosine(1519) in 16S rRNA + 4 S-adenosyl-L-methionine = N(6)-dimethyladenosine(1518)/N(6)-dimethyladenosine(1519) in 16S rRNA + 4 S-adenosyl-L-homocysteine + 4 H(+). In terms of biological role, specifically dimethylates two adjacent adenosines (A1518 and A1519) in the loop of a conserved hairpin near the 3'-end of 16S rRNA in the 30S particle. May play a critical role in biogenesis of 30S subunits. This chain is Ribosomal RNA small subunit methyltransferase A, found in Nitrosomonas europaea (strain ATCC 19718 / CIP 103999 / KCTC 2705 / NBRC 14298).